The primary structure comprises 395 residues: uncharacterized protein (395 aa).

A disordered region spans residues 247 to 270; the sequence is GGTVVPPNPDQPNPTPPDSSSPNY. The span at 252–265 shows a compositional bias: pro residues; sequence PPNPDQPNPTPPDS.

This is an uncharacterized protein from Vibrio cholerae serotype O1 (strain ATCC 39315 / El Tor Inaba N16961).